A 286-amino-acid polypeptide reads, in one-letter code: Zinc finger protein ZAT5 (286 aa).

3 disordered regions span residues 1–28 (MMMGQDEVGSDQTQIIKGKRTKRQRSSS), 40–60 (STSSSAGGSGGERAVSDEYNS), and 131–171 (GGHR…FKVS). The C2H2-type 1 zinc finger occupies 115-137 (YECKTCNRTFSSFQALGGHRASH). The span at 154 to 171 (QPKSSASEEGQNSHFKVS) shows a compositional bias: polar residues. A C2H2-type 2 zinc finger spans residues 190 to 212 (HECSICGSEFTSGQALGGHMRRH).

In terms of tissue distribution, expressed in flowers and siliques.

It localises to the nucleus. Probable transcription factor that may be involved in stress responses. This is Zinc finger protein ZAT5 (ZAT5) from Arabidopsis thaliana (Mouse-ear cress).